A 379-amino-acid chain; its full sequence is Homoserine O-succinyltransferase (379 aa).

An AB hydrolase-1 domain is found at asparagine 51–leucine 360. Serine 157 serves as the catalytic Nucleophile. A substrate-binding site is contributed by arginine 227. Active-site residues include aspartate 323 and histidine 356. Aspartate 357 lines the substrate pocket.

The protein belongs to the AB hydrolase superfamily. MetX family. As to quaternary structure, homodimer.

The protein resides in the cytoplasm. The catalysed reaction is L-homoserine + succinyl-CoA = O-succinyl-L-homoserine + CoA. The protein operates within amino-acid biosynthesis; L-methionine biosynthesis via de novo pathway; O-succinyl-L-homoserine from L-homoserine: step 1/1. Its activity is regulated as follows. Requires MetW for activity. In terms of biological role, transfers a succinyl group from succinyl-CoA to L-homoserine, forming succinyl-L-homoserine. The sequence is that of Homoserine O-succinyltransferase from Pseudomonas putida (strain ATCC 47054 / DSM 6125 / CFBP 8728 / NCIMB 11950 / KT2440).